The chain runs to 217 residues: Coiled-coil domain-containing protein 124-A (217 aa).

Residues 1–128 (MPKKFQGENT…HLEMPLEENV (128 aa)) form a disordered region. Composition is skewed to basic and acidic residues over residues 18-45 (RKAE…DDKH), 52-74 (RKED…QRLL), and 95-128 (TRAE…EENV). Residues 46–82 (VARKGQRKEDKEKKRLEQLERKKESQRLLDEEDSKMK) adopt a coiled-coil conformation.

Belongs to the CCDC124 family. In terms of assembly, associates with translationally inactive ribosomes in the nonrotated state.

The protein resides in the cytoplasm. It is found in the cytoskeleton. Its subcellular location is the microtubule organizing center. The protein localises to the centrosome. It localises to the midbody. Its function is as follows. Ribosome-binding protein involved in ribosome hibernation: associates with translationally inactive ribosomes and stabilizes the nonrotated conformation of the 80S ribosome, thereby promoting ribosome preservation and storage. This Xenopus laevis (African clawed frog) protein is Coiled-coil domain-containing protein 124-A (ccdc124-a).